The primary structure comprises 148 residues: Large ribosomal subunit protein bL9 (148 aa).

It belongs to the bacterial ribosomal protein bL9 family.

Functionally, binds to the 23S rRNA. This chain is Large ribosomal subunit protein bL9, found in Pelotomaculum thermopropionicum (strain DSM 13744 / JCM 10971 / SI).